We begin with the raw amino-acid sequence, 149 residues long: Large ribosomal subunit protein uL15 (149 aa).

The disordered stretch occupies residues 1 to 58; the sequence is MKLHNLRPAKGGEVKARKRVGRGYGSGLGHNAGRGRDGQNSRSGGGVRPGFEGGQMPL. Composition is skewed to gly residues over residues 22-32 and 43-53; these read RGYGSGLGHNA and SGGGVRPGFEG.

It belongs to the universal ribosomal protein uL15 family. In terms of assembly, part of the 50S ribosomal subunit.

Its function is as follows. Binds to the 23S rRNA. This Finegoldia magna (strain ATCC 29328 / DSM 20472 / WAL 2508) (Peptostreptococcus magnus) protein is Large ribosomal subunit protein uL15.